A 1562-amino-acid chain; its full sequence is Neuralized-like protein 4 (1562 aa).

A compositionally biased stretch (gly residues) spans 1–42; that stretch reads MAAGSGGSGGSGGGPGPGPGGGGGPSGSGSGPGSNGGLGSGG. Disordered regions lie at residues 1-48 and 207-236; these read MAAG…HPRT and PEPG…LAEQ. NHR domains follow at residues 41–207 and 317–484; these read GGEL…VLPP and ALLF…IVHN. Residues 207 to 224 show a composition bias toward pro residues; it reads PEPGFSPPTPIPTPPLEP. A Phosphoserine modification is found at S502. 2 consecutive NHR domains span residues 520–686 and 716–884; these read RLLF…IVDD and DLRF…ITNA. The segment at 691-716 is disordered; the sequence is PVPEPLPEGNNQVSPSSPSSGAGGSD. S907 is modified (phosphoserine). Residues 913–1086 form the NHR 5 domain; the sequence is AHRFHSTCGK…PVRGVSIVSS (174 aa). The segment at 1086-1123 is disordered; the sequence is STRLEESEGTQPPSPSSDTGSEGEEDDEGEEHGLGGQN. Acidic residues predominate over residues 1106–1115; sequence SEGEEDDEGE. Residues 1131-1294 form the NHR 6 domain; the sequence is TLEFLENHGK…QCEQVTIVNP (164 aa).

Interacts with CCP110; this interaction propmotes CCP110 ubiquitination and degradation via the proteasome pathway. Via its interaction with CCP110, may indirectly interact with CEP97. Interacts with the E3 ubiquitin-protein ligase HERC2 and UBE3A. May interact with MAPK6 and hence mediate MAPK6 interaction with UBE3A. Interaction with UBE3A may be indirect and mediated by HERC2. Post-translationally, ubiquitinated; undergoes HERC2-dependent 'Lys-48' ubiquitination. This ubiquitination leads to proteasomal degradation. As to expression, widely expressed at high levels (including brain).

The protein localises to the cytoplasm. It localises to the cytoskeleton. Its subcellular location is the microtubule organizing center. The protein resides in the centrosome. It is found in the centriole. Functionally, promotes CCP110 ubiquitination and proteasome-dependent degradation. By counteracting accumulation of CP110, maintains normal centriolar homeostasis and preventing formation of ectopic microtubular organizing centers. This Homo sapiens (Human) protein is Neuralized-like protein 4 (NEURL4).